A 463-amino-acid chain; its full sequence is Lipase 6 (463 aa).

Residues Met-1 to Ala-16 form the signal peptide. The cysteines at positions 112 and 285 are disulfide-linked. The active-site Charge relay system is Ser-196. The N-linked (GlcNAc...) asparagine glycan is linked to Asn-231. Residues Asp-348 and His-381 each act as charge relay system in the active site. Residues Cys-364 and Cys-409 are joined by a disulfide bond. The N-linked (GlcNAc...) asparagine glycan is linked to Asn-422.

It belongs to the AB hydrolase superfamily. Lipase family. Class Lip subfamily.

It localises to the secreted. It carries out the reaction a triacylglycerol + H2O = a diacylglycerol + a fatty acid + H(+). Functionally, secreted lipase that is able to hydrolyze both the neutral triacylglycerols and the monopalmitate ester Tween 40, allowing the use of hydrolyzed products as carbon sources. Has broad lipolytic activity, which may be important for colonization and subsequent infection, therefore contributing to the persistence and virulence in human tissue. This is Lipase 6 from Candida albicans (strain SC5314 / ATCC MYA-2876) (Yeast).